A 163-amino-acid chain; its full sequence is Nucleotide-binding protein YajQ (163 aa).

Belongs to the YajQ family.

In terms of biological role, nucleotide-binding protein. The chain is Nucleotide-binding protein YajQ from Salmonella agona (strain SL483).